Reading from the N-terminus, the 441-residue chain is MKLWGGRFKSETDKLMEEFNSSISFDIRLLKHDILGSIAHAKGLYKAGVLTEDELNLIEKGLKEILDETNVGEIPNDEDVHSYVERLLTEKIGDVGRKLHTGRSRNDQVATDERLYLRDEIDKIKEDLIKLIDTLKEMAETYKKAIMPGYTHLQRAQPVTFGHHLLAYVEMFKRDLSRLEDMYKRVNVMPLGSGALAGTTFDIDRKYVASLLGFDDITLNSMDGVSDRDFVIEFLSFASITMMHLSRFCEELILWSTKEFDFIEMDDRFSTGSSMMPQKKNPDAAELIRGKTGRVYGDLITILTVMKGLSLAYNKDMQEDKEALFDGIDTLKMSLKVFTEMIKTIKVKTDNMEKAAKYGYMNATDFADYLVSKGIPFRTAHEIAGKVVLYAIERNLAIEDLPLNELKKFSDVIDEDVYEAIDLKNTLKKKKTIGAPTSIQS.

It belongs to the lyase 1 family. Argininosuccinate lyase subfamily.

It is found in the cytoplasm. The enzyme catalyses 2-(N(omega)-L-arginino)succinate = fumarate + L-arginine. Its pathway is amino-acid biosynthesis; L-arginine biosynthesis; L-arginine from L-ornithine and carbamoyl phosphate: step 3/3. This chain is Argininosuccinate lyase, found in Thermoanaerobacter pseudethanolicus (strain ATCC 33223 / 39E) (Clostridium thermohydrosulfuricum).